Here is a 466-residue protein sequence, read N- to C-terminus: SVGFKAGVKDYKLTYYTPDYETKDTDILAAFRVTPQPGVPPEEAGAAVAAESSTGTWTTVWTDGLTSLDRYKGRCYHIEPIAGEENQFIAYVAYPLDLFEEGSVTNMFTSIVGNVFGFKALRALRLEDLRIPPAYSKTFQGPPHGIQVERDKLNKYGRPLLGCTIKPKLGLSAKNYGRAVYECLRGGLDFTKDDENVNSQPFMRWRDRFLFCAEAIYKAQAETGEIKGHYLNATAGTCEEMIKRAVFARELGAPIIMHDYLTGGFTANTSLAHYCRDNGLLLHIHRAMHAVIDRQKNHGMHFRVLAKALRLSGGDHIHAGTVVGKLEGEREITLGFVDLLRDDFVEKDRSRGIFFTQDWVSLPGVLPVASGGIHVWHMPALTEIFGDDSVLQFGGGTLGHPWGNAPGAVANRVALEACVQARNEGRDLAREGNEIIRKASKWSPELAAACEVWKEIKFEFPAVDTL.

Lys-5 is modified (N6,N6,N6-trimethyllysine). Residues Asn-114 and Thr-164 each contribute to the substrate site. Lys-166 functions as the Proton acceptor in the catalytic mechanism. Lys-168 is a substrate binding site. 3 residues coordinate Mg(2+): Lys-192, Asp-194, and Glu-195. Lys-192 carries the post-translational modification N6-carboxylysine. His-285 (proton acceptor) is an active-site residue. The substrate site is built by Arg-286, His-318, and Ser-370.

This sequence belongs to the RuBisCO large chain family. Type I subfamily. As to quaternary structure, heterohexadecamer of 8 large chains and 8 small chains; disulfide-linked. The disulfide link is formed within the large subunit homodimers. Mg(2+) serves as cofactor. In terms of processing, the disulfide bond which can form in the large chain dimeric partners within the hexadecamer appears to be associated with oxidative stress and protein turnover.

The protein localises to the plastid. It is found in the chloroplast. The catalysed reaction is 2 (2R)-3-phosphoglycerate + 2 H(+) = D-ribulose 1,5-bisphosphate + CO2 + H2O. It catalyses the reaction D-ribulose 1,5-bisphosphate + O2 = 2-phosphoglycolate + (2R)-3-phosphoglycerate + 2 H(+). Functionally, ruBisCO catalyzes two reactions: the carboxylation of D-ribulose 1,5-bisphosphate, the primary event in carbon dioxide fixation, as well as the oxidative fragmentation of the pentose substrate in the photorespiration process. Both reactions occur simultaneously and in competition at the same active site. This chain is Ribulose bisphosphate carboxylase large chain, found in Moringa oleifera (Horseradish tree).